The sequence spans 591 residues: Cytidine monophosphate-N-acetylneuraminic acid hydroxylase (591 aa).

Positions 16–114 (LASAEVESLK…IENDDENGVS (99 aa)) constitute a Rieske domain. Cys56, His58, Cys77, and His80 together coordinate [2Fe-2S] cluster.

It belongs to the CMP-Neu5Ac hydroxylase family. The cofactor is [2Fe-2S] cluster.

It localises to the cytoplasm. It catalyses the reaction CMP-N-acetyl-beta-neuraminate + 2 Fe(II)-[cytochrome b5] + O2 + 2 H(+) = CMP-N-glycoloyl-beta-neuraminate + 2 Fe(III)-[cytochrome b5] + H2O. It functions in the pathway amino-sugar metabolism; N-acetylneuraminate metabolism. Its function is as follows. Sialic acids are components of carbohydrate chains of glycoconjugates and are involved in cell-cell recognition and cell-pathogen interactions. Catalyzes the conversion of CMP-N-acetylneuraminic acid (CMP-Neu5Ac) into its hydroxylated derivative CMP-N-glycolylneuraminic acid (CMP-Neu5Gc), a sialic acid abundantly expressed at the surface of many cells. In Xenopus laevis (African clawed frog), this protein is Cytidine monophosphate-N-acetylneuraminic acid hydroxylase (cmah).